The following is a 215-amino-acid chain: Pyrrolidone-carboxylate peptidase (215 aa).

Residues Glu80, Cys143, and His167 contribute to the active site.

This sequence belongs to the peptidase C15 family. Homotetramer.

It is found in the cytoplasm. The enzyme catalyses Release of an N-terminal pyroglutamyl group from a polypeptide, the second amino acid generally not being Pro.. Functionally, removes 5-oxoproline from various penultimate amino acid residues except L-proline. This is Pyrrolidone-carboxylate peptidase from Bacillus cereus (strain AH820).